Here is a 286-residue protein sequence, read N- to C-terminus: uncharacterized protein (286 aa).

The Integrase catalytic domain maps to 1-146; it reads MSRYKKDNDG…KPVDVERGDF (146 aa). Over residues 252–263 the composition is skewed to basic residues; that stretch reads RKVKAKKGKKDK. The tract at residues 252-286 is disordered; that stretch reads RKVKAKKGKKDKKLKESKKSDDTSTGASTGSSIAM. The span at 264 to 273 shows a compositional bias: basic and acidic residues; it reads KLKESKKSDD. Residues 274 to 286 show a composition bias toward low complexity; the sequence is TSTGASTGSSIAM.

This is an uncharacterized protein from Caenorhabditis elegans.